Here is a 94-residue protein sequence, read N- to C-terminus: Putative pterin-4-alpha-carbinolamine dehydratase (94 aa).

Belongs to the pterin-4-alpha-carbinolamine dehydratase family.

It carries out the reaction (4aS,6R)-4a-hydroxy-L-erythro-5,6,7,8-tetrahydrobiopterin = (6R)-L-erythro-6,7-dihydrobiopterin + H2O. The polypeptide is Putative pterin-4-alpha-carbinolamine dehydratase (Caulobacter vibrioides (strain ATCC 19089 / CIP 103742 / CB 15) (Caulobacter crescentus)).